A 343-amino-acid polypeptide reads, in one-letter code: DNA repair and recombination protein RadA (343 aa).

107–114 serves as a coordination point for ATP; it reads GEFGAGKS.

This sequence belongs to the eukaryotic RecA-like protein family.

In terms of biological role, involved in DNA repair and in homologous recombination. Binds and assemble on single-stranded DNA to form a nucleoprotein filament. Hydrolyzes ATP in a ssDNA-dependent manner and promotes DNA strand exchange between homologous DNA molecules. The protein is DNA repair and recombination protein RadA of Halobacterium salinarum (strain ATCC 29341 / DSM 671 / R1).